The chain runs to 107 residues: Nucleoid-associated protein Xfasm12_1216 (107 aa).

This sequence belongs to the YbaB/EbfC family. As to quaternary structure, homodimer.

The protein resides in the cytoplasm. Its subcellular location is the nucleoid. Binds to DNA and alters its conformation. May be involved in regulation of gene expression, nucleoid organization and DNA protection. This is Nucleoid-associated protein Xfasm12_1216 from Xylella fastidiosa (strain M12).